The chain runs to 640 residues: RecBCD enzyme subunit RecD (640 aa).

194-201 (GGPGTGKT) contributes to the ATP binding site.

The protein belongs to the RecD family. As to quaternary structure, heterotrimer of RecB, RecC and RecD. All subunits contribute to DNA-binding.

It catalyses the reaction Couples ATP hydrolysis with the unwinding of duplex DNA at the replication fork by translocating in the 5'-3' direction. This creates two antiparallel DNA single strands (ssDNA). The leading ssDNA polymer is the template for DNA polymerase III holoenzyme which synthesizes a continuous strand.. It carries out the reaction ATP + H2O = ADP + phosphate + H(+). Its function is as follows. A helicase/nuclease that prepares dsDNA breaks (DSB) for recombinational DNA repair. Binds to DSBs and unwinds DNA via a highly rapid and processive ATP-dependent bidirectional helicase activity. Unwinds dsDNA until it encounters a Chi (crossover hotspot instigator) sequence from the 3' direction. Cuts ssDNA a few nucleotides 3' to the Chi site. The properties and activities of the enzyme are changed at Chi. The Chi-altered holoenzyme produces a long 3'-ssDNA overhang and facilitates RecA-binding to the ssDNA for homologous DNA recombination and repair. Holoenzyme degrades any linearized DNA that is unable to undergo homologous recombination. In the holoenzyme this subunit has ssDNA-dependent ATPase and 5'-3' helicase activity. When added to pre-assembled RecBC greatly stimulates nuclease activity and augments holoenzyme processivity. Negatively regulates the RecA-loading ability of RecBCD. This is RecBCD enzyme subunit RecD from Haemophilus influenzae (strain ATCC 51907 / DSM 11121 / KW20 / Rd).